The chain runs to 439 residues: MIKKLGLNFKNTKKVTNELKQRIASVVIALIIFRIGSFIPIPGIDTTILSRILNDQKGTIIEMFNMFSGGALSRASIFALGIMPYISSSIIIQLLTLVIPSLSEIKKEGEVGRTKINQYTRYTTLVLALFQSIGIVTSLPKISGMNQIIIHPDFYFYFTAIIILVTGTMFLMWLGELITECGIGNGISIIIFIGIIAGLPSAIVHTIEQTRQGDLHILLFLCVLILIFSVVFLVVFIERSQRKIIIHYAQRQKGRRIYSTQSTHLPLKINMAGVIPAIFASSVVLFPVTIISWFGIDRKCYLLKTIFFYFQPNQPLYLILYVFSIIFFCFFYTGLVFNPRETADNLKKSGGFISGIRPGEQTAKYINKIMIRLTLFGSLYIAFICLIPEFMRSAMNVPFYFGGTSLLIVVVVIMDFIAQIQTLIMSSQYESVLKKANLN.

10 helical membrane-spanning segments follow: residues Ile-23–Gly-43, Ile-77–Leu-97, Leu-125–Met-145, Phe-154–Leu-174, Ile-187–Ile-207, Ile-217–Ile-237, Val-274–Phe-294, Tyr-317–Phe-337, Ile-369–Glu-389, and Val-397–Ile-417.

The protein belongs to the SecY/SEC61-alpha family. As to quaternary structure, component of the Sec protein translocase complex. Heterotrimer consisting of SecY, SecE and SecG subunits. The heterotrimers can form oligomers, although 1 heterotrimer is thought to be able to translocate proteins. Interacts with the ribosome. Interacts with SecDF, and other proteins may be involved. Interacts with SecA.

It localises to the cell membrane. Functionally, the central subunit of the protein translocation channel SecYEG. Consists of two halves formed by TMs 1-5 and 6-10. These two domains form a lateral gate at the front which open onto the bilayer between TMs 2 and 7, and are clamped together by SecE at the back. The channel is closed by both a pore ring composed of hydrophobic SecY resides and a short helix (helix 2A) on the extracellular side of the membrane which forms a plug. The plug probably moves laterally to allow the channel to open. The ring and the pore may move independently. This chain is Protein translocase subunit SecY, found in Buchnera aphidicola subsp. Schizaphis graminum (strain Sg).